The chain runs to 606 residues: Polyphenol oxidase A1, chloroplastic (606 aa).

Residues M1–A92 constitute a chloroplast transit peptide. The interval K32 to L63 is disordered. A compositionally biased stretch (basic residues) spans Q35 to R44. Disulfide bonds link C103–C121 and C120–C182. Positions 181, 202, 211, 333, 337, and 367 each coordinate Cu cation. A cross-link (2'-(S-cysteinyl)-histidine (Cys-His)) is located at residues C185–H202.

Belongs to the tyrosinase family. It depends on Cu(2+) as a cofactor.

It localises to the plastid. It is found in the chloroplast thylakoid lumen. The catalysed reaction is 2 catechol + O2 = 2 1,2-benzoquinone + 2 H2O. In terms of biological role, catalyzes the oxidation of mono- and o-diphenols to o-diquinones. The sequence is that of Polyphenol oxidase A1, chloroplastic from Vicia faba (Broad bean).